Consider the following 234-residue polypeptide: Probable pectate lyase F (234 aa).

The first 17 residues, 1-17, serve as a signal peptide directing secretion; sequence MRSTAAVLSILLPGALA. The N-linked (GlcNAc...) asparagine glycan is linked to Asn168.

It belongs to the polysaccharide lyase 3 family. The cofactor is Ca(2+).

The protein localises to the secreted. The enzyme catalyses Eliminative cleavage of (1-&gt;4)-alpha-D-galacturonan to give oligosaccharides with 4-deoxy-alpha-D-galact-4-enuronosyl groups at their non-reducing ends.. Its function is as follows. Pectinolytic enzyme consist of four classes of enzymes: pectin lyase, polygalacturonase, pectin methylesterase and rhamnogalacturonase. Among pectinolytic enzymes, pectin lyase is the most important in depolymerization of pectin, since it cleaves internal glycosidic bonds of highly methylated pectins. Favors pectate, the anion, over pectin, the methyl ester. The chain is Probable pectate lyase F (plyF) from Aspergillus terreus (strain NIH 2624 / FGSC A1156).